We begin with the raw amino-acid sequence, 351 residues long: Ion-translocating oxidoreductase complex subunit D (351 aa).

4 consecutive transmembrane segments (helical) span residues 20-40, 44-64, 89-109, and 123-143; these read IMLW…YFFG, LIQV…TLSL, LPPL…IIIA, and PAMI…TSWL. Thr187 carries the FMN phosphoryl threonine modification. 5 consecutive transmembrane segments (helical) span residues 215–235, 244–264, 267–287, 301–321, and 322–342; these read LSGI…LFLL, IPVS…IIAP, FAQP…FFIA, LIFG…GGYP, and DGVA…DYYT.

Belongs to the NqrB/RnfD family. In terms of assembly, the complex is composed of six subunits: RnfA, RnfB, RnfC, RnfD, RnfE and RnfG. The cofactor is FMN.

It is found in the cell inner membrane. Part of a membrane-bound complex that couples electron transfer with translocation of ions across the membrane. In Pectobacterium atrosepticum (strain SCRI 1043 / ATCC BAA-672) (Erwinia carotovora subsp. atroseptica), this protein is Ion-translocating oxidoreductase complex subunit D.